An 83-amino-acid chain; its full sequence is Small ribosomal subunit protein bS16 (83 aa).

This sequence belongs to the bacterial ribosomal protein bS16 family.

This chain is Small ribosomal subunit protein bS16, found in Pseudomonas entomophila (strain L48).